Consider the following 1056-residue polypeptide: PAX-interacting protein 1 (1056 aa).

2 consecutive BRCT domains span residues 8 to 93 (VPEE…GFSP) and 94 to 183 (ESCQ…FYHP). The interval 94–183 (ESCQIFFGLT…RRKDEAFYHP (90 aa)) is interaction with PAGR1. Residues 188 to 205 (YEEEEEEEEEGDNEEQDS) are compositionally biased toward acidic residues. Disordered stretches follow at residues 188 to 276 (YEEE…QRRL), 393 to 412 (THVLQQHHPPQQPQQQHPAL), and 419 to 486 (MQLQ…FQQQ). The span at 214 to 223 (SSVASSAVAS) shows a compositional bias: low complexity. Phosphoserine occurs at positions 223 and 230. Composition is skewed to low complexity over residues 396–412 (LQQHHPPQQPQQQHPAL), 419–435 (MQLQQQQQQQQQQQQQP), and 445–486 (QFPQ…FQQQ). The interval 577-1056 (QLFGHDPAVE…TLDYESYKFN (480 aa)) is interaction with TP53BP1. 4 BRCT domains span residues 588–681 (PEES…RALH), 688–776 (PGGK…VQYS), 853–934 (TPLV…NYIL), and 955–989 (HVSPLFKTKYFYITPGICPSLATMKAIVECAGGKV). A Nuclear localization signal motif is present at residues 655 to 672 (RKRCVTAHWLNTVLKKKK).

Interacts with the C-terminal transactivation domain of PAX2. Forms a constitutive complex with PAGR1 independently of the MLL2/MLL3 complex. Interacts with TP53BP1 (when phosphorylated at the N-terminus by ATM). Interacts with HLTF. Component of the KMT2 family MLL2/MLL3 complex (also named ASCOM complex), at least composed of the HMTs KMT2D and/or KMT2C, the common subunits ASH2L, RBBP5, WDR5 and DPY30, and the complex type-specific subunits PAXIP1/PTIP, PAGR1, NCOA6 and KDM6A; required for the association of PAGR1 with the MLL2/MLL3 complex. Interacts with NUPR1; this interaction prevents PAXIP1 inhibition of PAX2 transcription factor activity. In terms of tissue distribution, expression detected in all tissues examined, including brain stem, cerebellum, cortex, heart, spleen, kidney, liver, thymus and lung.

Its subcellular location is the nucleus matrix. The protein resides in the chromosome. In terms of biological role, involved in DNA damage response and in transcriptional regulation through histone methyltransferase (HMT) complexes such as the MLL2/MLL3 complex. Plays a role in early development. In DNA damage response is required for cell survival after ionizing radiation. In vitro shown to be involved in the homologous recombination mechanism for the repair of double-strand breaks (DSBs). Its localization to DNA damage foci requires Rnf8 and Ube2n. Recruits Tp53bp1 to DNA damage foci and, at least in particular repair processes, effective DNA damage response appears to require the association with Tp53bp1 phosphorylated by Atm. Together with Tp53bp1 regulates Atm association. Proposed to recruit Pagr1 to sites of DNA damage and the Pagr1:Paxip1 complex is required for cell survival in response to DNA damage independently of the MLL2/MLL3 complex. However, this function has been questioned. Promotes ubiquitination of PCNA following UV irradiation and may regulate recruitment of polymerase eta and Rad51 to chromatin after DNA damage. Proposed to be involved in transcriptional regulation by linking MLL-containing histone methyltransferase (HMT) complexes to gene promoters by interacting with promoter-bound transcription factors such as Pax2. Associates with gene promoters that are known to be regulated by Kmt2d/Mll2. During immunoglobulin class switching in activated B-cells is involved in trimethylation of histone H3 at 'Lys-4' and in transcription initiation of downstream switch regions at the immunoglobulin heavy-chain (Igh) locus; this function appears to involve the recruitment of MLL-containing HMT complexes. Conflictingly, its function in transcriptional regulation during immunoglobulin class switching is reported to be independent of the MLL2/MLL3 complex. The chain is PAX-interacting protein 1 (Paxip1) from Mus musculus (Mouse).